A 256-amino-acid chain; its full sequence is Pimeloyl-[acyl-carrier protein] methyl ester esterase (256 aa).

The AB hydrolase-1 domain occupies 15–242 (HLVLLHGWGL…AAHAPFISHP (228 aa)). Residues tryptophan 22, 82-83 (SL), and 143-147 (FLALQ) contribute to the substrate site. Residue serine 82 is the Nucleophile of the active site. Catalysis depends on residues aspartate 207 and histidine 235. Histidine 235 lines the substrate pocket.

This sequence belongs to the AB hydrolase superfamily. Carboxylesterase BioH family. In terms of assembly, monomer.

The protein localises to the cytoplasm. The catalysed reaction is 6-carboxyhexanoyl-[ACP] methyl ester + H2O = 6-carboxyhexanoyl-[ACP] + methanol + H(+). It functions in the pathway cofactor biosynthesis; biotin biosynthesis. The physiological role of BioH is to remove the methyl group introduced by BioC when the pimeloyl moiety is complete. It allows to synthesize pimeloyl-ACP via the fatty acid synthetic pathway through the hydrolysis of the ester bonds of pimeloyl-ACP esters. This chain is Pimeloyl-[acyl-carrier protein] methyl ester esterase, found in Escherichia coli O81 (strain ED1a).